The primary structure comprises 78 residues: Large ribosomal subunit protein bL28 (78 aa).

Positions 1–20 (MSRVCQVTSKRPAVGNNRSH) are disordered.

This sequence belongs to the bacterial ribosomal protein bL28 family.

In Haemophilus ducreyi (strain 35000HP / ATCC 700724), this protein is Large ribosomal subunit protein bL28.